A 215-amino-acid polypeptide reads, in one-letter code: N-(5'-phosphoribosyl)anthranilate isomerase (215 aa).

This sequence belongs to the TrpF family.

It catalyses the reaction N-(5-phospho-beta-D-ribosyl)anthranilate = 1-(2-carboxyphenylamino)-1-deoxy-D-ribulose 5-phosphate. The protein operates within amino-acid biosynthesis; L-tryptophan biosynthesis; L-tryptophan from chorismate: step 3/5. In Sinorhizobium medicae (strain WSM419) (Ensifer medicae), this protein is N-(5'-phosphoribosyl)anthranilate isomerase.